A 499-amino-acid chain; its full sequence is Increased recombination centers protein 15 (499 aa).

Asp-47–Tyr-56 serves as a coordination point for FAD.

This sequence belongs to the class-I pyridine nucleotide-disulfide oxidoreductase family.

The protein localises to the cytoplasm. This chain is Increased recombination centers protein 15 (IRC15), found in Saccharomyces cerevisiae (strain ATCC 204508 / S288c) (Baker's yeast).